The chain runs to 445 residues: Hydroxycinnamoyl-CoA:5-hydroxyanthranilate N-hydroxycinnamoyltransferase HHT4 (445 aa).

This sequence belongs to the plant acyltransferase family.

It carries out the reaction 5-hydroxyanthranilate + (E)-4-coumaroyl-CoA = avenanthramide A + CoA. The catalysed reaction is 5-hydroxyanthranilate + (E)-caffeoyl-CoA = avenanthramide C + CoA. In terms of biological role, involved in the biosynthesis of avenanthramide phytoalexins, which are phenolic alkaloids found mainly in oats. Catalyzes the N-acylation of 5-hydroxyanthranilate with 4-coumaroyl-CoA or caffeoyl-CoA as acyl donors, forming avenanthramide A and avenanthramide C, respectively. Does not accept feruloyl-CoA as a substrate. The polypeptide is Hydroxycinnamoyl-CoA:5-hydroxyanthranilate N-hydroxycinnamoyltransferase HHT4 (Avena sativa (Oat)).